The sequence spans 275 residues: Light-independent protochlorophyllide reductase iron-sulfur ATP-binding protein (275 aa).

ATP-binding positions include 12 to 17 (GIGKST) and Lys41. Ser16 is a Mg(2+) binding site. [4Fe-4S] cluster is bound by residues Cys97 and Cys131. 182–183 (NR) contributes to the ATP binding site.

It belongs to the NifH/BchL/ChlL family. In terms of assembly, homodimer. Protochlorophyllide reductase is composed of three subunits; BchL, BchN and BchB. [4Fe-4S] cluster serves as cofactor.

The enzyme catalyses chlorophyllide a + oxidized 2[4Fe-4S]-[ferredoxin] + 2 ADP + 2 phosphate = protochlorophyllide a + reduced 2[4Fe-4S]-[ferredoxin] + 2 ATP + 2 H2O. It participates in porphyrin-containing compound metabolism; bacteriochlorophyll biosynthesis (light-independent). Its function is as follows. Component of the dark-operative protochlorophyllide reductase (DPOR) that uses Mg-ATP and reduced ferredoxin to reduce ring D of protochlorophyllide (Pchlide) to form chlorophyllide a (Chlide). This reaction is light-independent. The L component serves as a unique electron donor to the NB-component of the complex, and binds Mg-ATP. This chain is Light-independent protochlorophyllide reductase iron-sulfur ATP-binding protein, found in Chlorobium limicola (strain DSM 245 / NBRC 103803 / 6330).